The chain runs to 572 residues: Sulfate adenylyltransferase (572 aa).

The interval 1 to 169 is N-terminal; sequence MANAPHGGVL…IEAVNKLNHY (169 aa). Positions 170–393 are catalytic; sequence DYVALRYTPA…LRESNPPRAT (224 aa). Glutamine 197 contacts sulfate. ATP contacts are provided by residues 197 to 200 and 291 to 294; these read QTRN and GRDH. Active-site residues include threonine 198, arginine 199, and asparagine 200. Arginine 199 contacts sulfate. Alanine 295 lines the sulfate pocket. Valine 333 provides a ligand contact to ATP. The segment at 394-572 is allosteric regulation domain; adenylyl-sulfate kinase-like; sequence QGFTIFLTGY…LESQGFLERQ (179 aa). 3'-phosphoadenylyl sulfate is bound by residues 433–436, arginine 450, 476–477, and arginine 514; these read DTVR and IA.

This sequence in the N-terminal section; belongs to the sulfate adenylyltransferase family. In the C-terminal section; belongs to the APS kinase family. In terms of assembly, homohexamer. Dimer of trimers.

It is found in the cytoplasm. The enzyme catalyses sulfate + ATP + H(+) = adenosine 5'-phosphosulfate + diphosphate. The protein operates within sulfur metabolism; hydrogen sulfide biosynthesis; sulfite from sulfate: step 1/3. Its activity is regulated as follows. Allosterically inhibited by 3'-phosphoadenosine 5'-phosphosulfate (PAPS). Functionally, catalyzes the first intracellular reaction of sulfate assimilation, forming adenosine-5'-phosphosulfate (APS) from inorganic sulfate and ATP. Plays an important role in sulfate activation as a component of the biosynthesis pathway of sulfur-containing amino acids. The chain is Sulfate adenylyltransferase from Penicillium chrysogenum (Penicillium notatum).